Consider the following 178-residue polypeptide: MTQMTPSDVPSMGRRQFMNLLTFGTATGVALGALYPVANYFMPLRAGGGGGGTSAKDELGNPITASGWLSNHPAGDRSLVQGLKGDPTYLIVEGSEAIGNFGINAICTHLGCVVPWNSGANKYICPCHGSQYDANGKVVRGPAPLSLALAHIDVEDDKVFVSQWAETDFRTGEKPWWT.

The helical transmembrane segment at 20-42 (LLTFGTATGVALGALYPVANYFM) threads the bilayer. The 91-residue stretch at 71 to 161 (NHPAGDRSLV…IDVEDDKVFV (91 aa)) folds into the Rieske domain. Cys107, His109, Cys125, and His128 together coordinate [2Fe-2S] cluster. Cys112 and Cys127 are oxidised to a cystine.

This sequence belongs to the Rieske iron-sulfur protein family. As to quaternary structure, the 4 large subunits of the cytochrome b6-f complex are cytochrome b6, subunit IV (17 kDa polypeptide, PetD), cytochrome f and the Rieske protein, while the 4 small subunits are PetG, PetL, PetM and PetN. The complex functions as a dimer. [2Fe-2S] cluster serves as cofactor.

The protein resides in the cellular thylakoid membrane. The catalysed reaction is 2 oxidized [plastocyanin] + a plastoquinol + 2 H(+)(in) = 2 reduced [plastocyanin] + a plastoquinone + 4 H(+)(out). Functionally, component of the cytochrome b6-f complex, which mediates electron transfer between photosystem II (PSII) and photosystem I (PSI), cyclic electron flow around PSI, and state transitions. The protein is Cytochrome b6-f complex iron-sulfur subunit of Prochlorococcus marinus (strain MIT 9211).